The chain runs to 423 residues: UPF0229 protein PSPPH_0628 (423 aa).

The disordered stretch occupies residues 65 to 110; it reads HHGRGGKQTVVHPGNKEFTTGEHIARPQGGGGGKGPGKAGNSGEGM. Residues 92–107 are compositionally biased toward gly residues; it reads QGGGGGKGPGKAGNSG.

Belongs to the UPF0229 family.

The sequence is that of UPF0229 protein PSPPH_0628 from Pseudomonas savastanoi pv. phaseolicola (strain 1448A / Race 6) (Pseudomonas syringae pv. phaseolicola (strain 1448A / Race 6)).